The primary structure comprises 715 residues: SANT and BTB domain regulator of class switch recombination (715 aa).

The SANT domain maps to 21-59; sequence DMILCSLVGVPQPISWDSVARLVPGYTPKECAKRFEELK. Residues 146–254 form the BTB domain; sequence MVIHVCDEAK…ECIRYCHKNM (109 aa). Positions 552 to 573 are enriched in acidic residues; the sequence is SEEEDYTTGSEVTEDEVGDEEE. Disordered stretches follow at residues 552 to 623 and 689 to 715; these read SEEE…VSLQ and SAHS…GRPT. The segment covering 578 to 605 has biased composition (basic residues); it reads QAGRKVKPKRSAKQTKKHISSPSIHKKE. 2 stretches are compositionally biased toward polar residues: residues 614–623 and 690–699; these read DSSPFTVSLQ and AHSNTRQMNT.

It belongs to the KIAA1841 family. As to quaternary structure, homodimer.

Functionally, negatively regulates class switch recombination or isotype switching in splenic B-cells. The sequence is that of SANT and BTB domain regulator of class switch recombination from Xenopus laevis (African clawed frog).